The primary structure comprises 211 residues: 2,3-bisphosphoglycerate-dependent phosphoglycerate mutase (211 aa).

Residues 9-16 (RHGQSDWN), 22-23 (TG), Arg-61, 88-91 (ERDY), Lys-99, 115-116 (RR), and 159-160 (GN) each bind substrate. Catalysis depends on His-10, which acts as the Tele-phosphohistidine intermediate. Catalysis depends on Glu-88, which acts as the Proton donor/acceptor.

It belongs to the phosphoglycerate mutase family. BPG-dependent PGAM subfamily. As to quaternary structure, homodimer.

It carries out the reaction (2R)-2-phosphoglycerate = (2R)-3-phosphoglycerate. The protein operates within carbohydrate degradation; glycolysis; pyruvate from D-glyceraldehyde 3-phosphate: step 3/5. Its function is as follows. Catalyzes the interconversion of 2-phosphoglycerate and 3-phosphoglycerate. This Rhizobium meliloti (strain 1021) (Ensifer meliloti) protein is 2,3-bisphosphoglycerate-dependent phosphoglycerate mutase.